Consider the following 200-residue polypeptide: Probable E3 ubiquitin-protein ligase ATL45 (200 aa).

Residues 26-46 form a helical membrane-spanning segment; the sequence is MVVILSALLCALVCVAGLAAV. An RING-type; atypical zinc finger spans residues 113 to 155; that stretch reads CAICITEFSEGEEIRILPLCSHAFHVACIDKWLTSRSSCPSCR.

Belongs to the RING-type zinc finger family. ATL subfamily. As to quaternary structure, interacts with BIK1.

The protein localises to the membrane. It catalyses the reaction S-ubiquitinyl-[E2 ubiquitin-conjugating enzyme]-L-cysteine + [acceptor protein]-L-lysine = [E2 ubiquitin-conjugating enzyme]-L-cysteine + N(6)-ubiquitinyl-[acceptor protein]-L-lysine.. Its pathway is protein modification; protein ubiquitination. Functionally, E3 ubiquitin-protein ligase that possess E3 ubiquitin ligase activity in vitro and mediates protein monoubiquitination. Triggers the monoubiquitination of phosphorylated BIK1 in response to pathogen-associated molecular pattern (PAMP) detection. May be involved in the early steps of the plant defense signaling pathway. The polypeptide is Probable E3 ubiquitin-protein ligase ATL45 (Arabidopsis thaliana (Mouse-ear cress)).